Here is an 856-residue protein sequence, read N- to C-terminus: Rod cGMP-specific 3',5'-cyclic phosphodiesterase subunit beta (856 aa).

N-acetylserine is present on Ser2. 2 consecutive GAF domains span residues 71-220 (NMER…TLNL) and 252-429 (DIER…GWSV). Residues 481 to 814 (EEDELGKILK…KEWKALADEY (334 aa)) form the PDEase domain. The active-site Proton donor is the His557. Positions 561, 597, 598, and 718 each coordinate a divalent metal cation. The S-geranylgeranyl cysteine moiety is linked to residue Cys853. Residues 854–856 (CIL) constitute a propeptide, removed in mature form.

It belongs to the cyclic nucleotide phosphodiesterase family. As to quaternary structure, oligomer composed of two catalytic chains (alpha and beta), an inhibitory chain (gamma) and the delta chain. The cofactor is a divalent metal cation.

It is found in the membrane. Its subcellular location is the cell projection. It localises to the cilium. The protein localises to the photoreceptor outer segment. It carries out the reaction 3',5'-cyclic GMP + H2O = GMP + H(+). Functionally, rod-specific cGMP phosphodiesterase that catalyzes the hydrolysis of 3',5'-cyclic GMP. Necessary for the formation of a functional phosphodiesterase holoenzyme. Involved in retinal circadian rhythm photoentrainment via modulation of UVA and orange light-induced phase-shift of the retina clock. May participate in processes of transmission and amplification of the visual signal. The sequence is that of Rod cGMP-specific 3',5'-cyclic phosphodiesterase subunit beta from Mus musculus (Mouse).